The following is a 132-amino-acid chain: MFYKNRPLSPYVTIYSSQWTSISSIFHRLSGLYLVFFLFVLFCSIKFLFCFSTFWFVYKFVKTCFFFILSFFIVFIVFSMYSLFYHFFIGLRHLVWDEVILMEDNFVTMSTKLSLSLSLVLVLINCLRYFLV.

2 helical membrane-spanning segments follow: residues 32-49 (LYLVFFLFVLFCSIKFLF) and 59-81 (KFVKTCFFFILSFFIVFIVFSMY). His86 is a heme binding site. A helical membrane pass occupies residues 107–127 (VTMSTKLSLSLSLVLVLINCL).

The protein belongs to the cytochrome b560 family. Forms part of complex II containing four subunits: a 70 kDa flavoprotein (FP), a 27 kDa iron-sulfur protein (IP), a cytochrome B and a membrane-anchoring protein. It depends on heme as a cofactor.

The protein localises to the mitochondrion inner membrane. The protein operates within carbohydrate metabolism; tricarboxylic acid cycle. Membrane-anchoring subunit of succinate dehydrogenase (SDH) that is involved in complex II of the mitochondrial electron transport chain and is responsible for transferring electrons from succinate to ubiquinone (coenzyme Q). This Cyanidium caldarium (Red alga) protein is Succinate dehydrogenase cytochrome b560 subunit (SDH3).